The primary structure comprises 299 residues: Bifunctional protein FolD 2 (299 aa).

NADP(+) contacts are provided by residues 168–170 (GRS), S193, and I234.

The protein belongs to the tetrahydrofolate dehydrogenase/cyclohydrolase family. As to quaternary structure, homodimer.

The catalysed reaction is (6R)-5,10-methylene-5,6,7,8-tetrahydrofolate + NADP(+) = (6R)-5,10-methenyltetrahydrofolate + NADPH. The enzyme catalyses (6R)-5,10-methenyltetrahydrofolate + H2O = (6R)-10-formyltetrahydrofolate + H(+). The protein operates within one-carbon metabolism; tetrahydrofolate interconversion. Its function is as follows. Catalyzes the oxidation of 5,10-methylenetetrahydrofolate to 5,10-methenyltetrahydrofolate and then the hydrolysis of 5,10-methenyltetrahydrofolate to 10-formyltetrahydrofolate. This Rhizobium meliloti (strain 1021) (Ensifer meliloti) protein is Bifunctional protein FolD 2.